Here is a 162-residue protein sequence, read N- to C-terminus: Phospholipase A and acyltransferase 3 (162 aa).

Residues 1 to 133 (MLAPIPEPKP…VPRSDQVRDA (133 aa)) are Cytoplasmic-facing. The 117-residue stretch at 13–129 (LIEIFRPMYR…LRYGVPRSDQ (117 aa)) folds into the LRAT domain. Residues histidine 23 and histidine 35 contribute to the active site. Cysteine 113 functions as the Acyl-thioester intermediate in the catalytic mechanism. A helical transmembrane segment spans residues 134 to 154 (VKAVGIAGVGLAALGLVGVML). At 155-162 (SRNKKQKQ) the chain is on the lumenal side.

Belongs to the H-rev107 family. As to quaternary structure, interacts with PPP2R1A; this interaction might decrease PP2A activity. In terms of tissue distribution, ubiquitously expressed in normal tissues but down-regulated in primary carcinomas or in many cell lines derived from tumors. Highly expressed in white adipose tissue and in adipocytes. Expressed at lower levels in brown adipose tissue.

The protein localises to the cell membrane. It localises to the cytoplasm. The protein resides in the cytosol. Its subcellular location is the perinuclear region. It is found in the peroxisome membrane. The protein localises to the mitochondrion membrane. It localises to the nucleus envelope. The protein resides in the lysosome membrane. Its subcellular location is the endoplasmic reticulum membrane. The enzyme catalyses a 1,2-diacyl-sn-glycero-3-phosphocholine + H2O = a 1-acyl-sn-glycero-3-phosphocholine + a fatty acid + H(+). It catalyses the reaction a 1,2-diacyl-sn-glycero-3-phosphocholine + H2O = a 2-acyl-sn-glycero-3-phosphocholine + a fatty acid + H(+). It carries out the reaction 1,2-dihexadecanoyl-sn-glycero-3-phosphocholine + H2O = 1-hexadecanoyl-sn-glycero-3-phosphocholine + hexadecanoate + H(+). The catalysed reaction is 1,2-dihexadecanoyl-sn-glycero-3-phosphocholine + H2O = 2-hexadecanoyl-sn-glycero-3-phosphocholine + hexadecanoate + H(+). The enzyme catalyses 1-hexadecanoyl-2-(9Z-octadecenoyl)-sn-glycero-3-phosphocholine + H2O = 2-(9Z-octadecenoyl)-sn-glycero-3-phosphocholine + hexadecanoate + H(+). It catalyses the reaction 1-hexadecanoyl-2-(9Z-octadecenoyl)-sn-glycero-3-phosphocholine + H2O = 1-hexadecanoyl-sn-glycero-3-phosphocholine + (9Z)-octadecenoate + H(+). It carries out the reaction 1-hexadecanoyl-2-(5Z,8Z,11Z,14Z-eicosatetraenoyl)-sn-glycero-3-phosphocholine + H2O = 1-hexadecanoyl-sn-glycero-3-phosphocholine + (5Z,8Z,11Z,14Z)-eicosatetraenoate + H(+). The catalysed reaction is 1-hexadecanoyl-2-(5Z,8Z,11Z,14Z-eicosatetraenoyl)-sn-glycero-3-phosphocholine + H2O = 2-(5Z,8Z,11Z,14Z)-eicosatetraenoyl-sn-glycero-3-phosphocholine + hexadecanoate + H(+). The enzyme catalyses 1-hexadecanoyl-2-(9Z,12Z-octadecadienoyl)-sn-glycero-3-phosphoethanolamine + H2O = 1-hexadecanoyl-sn-glycero-3-phosphoethanolamine + (9Z,12Z)-octadecadienoate + H(+). It catalyses the reaction 1-hexadecanoyl-2-(9Z,12Z-octadecadienoyl)-sn-glycero-3-phosphoethanolamine + H2O = 2-(9Z,12Z)-octadecadienoyl-sn-glycero-3-phosphoethanolamine + hexadecanoate + H(+). It carries out the reaction 1-hexadecanoyl-2-(5Z,8Z,11Z,14Z-eicosatetraenoyl)-sn-glycero-3-phosphoethanolamine + H2O = 1-hexadecanoyl-sn-glycero-3-phosphoethanolamine + (5Z,8Z,11Z,14Z)-eicosatetraenoate + H(+). The catalysed reaction is 1-hexadecanoyl-2-(5Z,8Z,11Z,14Z-eicosatetraenoyl)-sn-glycero-3-phosphoethanolamine + H2O = 2-(5Z,8Z,11Z,14Z)-eicosatetraenoyl-sn-glycero-3-phosphoethanolamine + hexadecanoate + H(+). The enzyme catalyses 1-hexanoyl-2-acyl-sn-glycero-3-phosphocholine + H2O = hexanoate + a 2-acyl-sn-glycero-3-phosphocholine + H(+). It catalyses the reaction 1-hexanoyl-2-acyl-sn-glycero-3-phosphocholine + H2O = 1-hexanoyl-sn-glycero-3-phosphocholine + a fatty acid + H(+). It carries out the reaction 1,2-diheptadecanoyl-sn-glycero-3-phosphoethanolamine + 1-(9Z-octadecenoyl)-2-hexadecanoyl-sn-glycero-3-phosphocholine = 1,2-diheptadecanoyl-sn-glycero-3-phospho-N-hexadecanoyl-ethanolamine + 1-(9Z-octadecenoyl)-sn-glycero-3-phosphocholine + H(+). The catalysed reaction is 1,2-diheptadecanoyl-sn-glycero-3-phosphoethanolamine + 1-(9Z-octadecenoyl)-2-hexadecanoyl-sn-glycero-3-phosphocholine = 1,2-diheptadecanoyl-sn-glycero-3-phospho-N-(9Z-octadecenoyl)-ethanolamine + 2-hexadecanoyl-sn-glycero-3-phosphocholine + H(+). The enzyme catalyses 1,2-dihexanoyl-sn-glycero-3-phosphoethanolamine + 2-heptanoyl-sn-glycero-3-phosphocholine = hexanoyl-sn-glycero-3-phosphoethanolamine + 1-hexanoyl-2-heptanoyl-sn-glycero-3-phosphocholine. It catalyses the reaction 1-hexadecanoyl-2-octadecanoyl-sn-glycero-3-phosphocholine + H2O = octadecanoate + 1-hexadecanoyl-sn-glycero-3-phosphocholine + H(+). It carries out the reaction 1-hexadecanoyl-2-octadecanoyl-sn-glycero-3-phosphocholine + H2O = 2-octadecanoyl-sn-glycero-3-phosphocholine + hexadecanoate + H(+). The catalysed reaction is 1-octadecanoyl-2-hexadecanoyl-sn-glycero-3-phosphocholine + H2O = 1-octadecanoyl-sn-glycero-3-phosphocholine + hexadecanoate + H(+). The enzyme catalyses 1-octadecanoyl-2-hexadecanoyl-sn-glycero-3-phosphocholine + H2O = 2-hexadecanoyl-sn-glycero-3-phosphocholine + octadecanoate + H(+). It catalyses the reaction 1-hexadecanoyl-2-(9Z,12Z-octadecadienoyl)-sn-glycero-3-phosphocholine + H2O = (9Z,12Z)-octadecadienoate + 1-hexadecanoyl-sn-glycero-3-phosphocholine + H(+). It carries out the reaction 1-hexadecanoyl-2-(9Z,12Z-octadecadienoyl)-sn-glycero-3-phosphocholine + H2O = 2-(9Z,12Z-octadecadienoyl)-sn-glycero-3-phosphocholine + hexadecanoate + H(+). The catalysed reaction is 1,2-di-(9Z-octadecenoyl)-sn-glycero-3-phosphocholine + H2O = 2-(9Z-octadecenoyl)-sn-glycero-3-phosphocholine + (9Z)-octadecenoate + H(+). The enzyme catalyses 1,2-dihexadecanoyl-sn-glycero-3-phosphocholine + H2O = hexadecanoyl-sn-glycero-3-phosphocholine + hexadecanoate + H(+). It catalyses the reaction 1,2-di-(9Z-octadecenoyl)-sn-glycero-3-phosphocholine + H2O = 1-(9Z-octadecenoyl)-sn-glycero-3-phosphocholine + (9Z)-octadecenoate + H(+). It carries out the reaction 1,2-di-(9Z-octadecenoyl)-sn-glycero-3-phosphoethanolamine + 1,2-dihexadecanoyl-sn-glycero-3-phosphocholine = hexadecanoyl-sn-glycero-3-phosphocholine + N-hexadecanoyl-1,2-di-(9Z-octadecenoyl)-sn-glycero-3-phosphoethanolamine + H(+). The catalysed reaction is 1,2-di-(9Z,12Z-octadecadienoyl)-sn-glycero-3-phosphocholine + H2O = 1-(9Z,12Z)-octadecadienoyl-sn-glycero-3-phosphocholine + (9Z,12Z)-octadecadienoate + H(+). Exhibits both phospholipase A1/2 and acyltransferase activities. Shows phospholipase A1 (PLA1) and A2 (PLA2), catalyzing the calcium-independent release of fatty acids from the sn-1 or sn-2 position of glycerophospholipids. For most substrates, PLA1 activity is much higher than PLA2 activity. Shows O-acyltransferase activity, catalyzing the transfer of a fatty acyl group from glycerophospholipid to the hydroxyl group of lysophospholipid. Shows N-acyltransferase activity,catalyzing the calcium-independent transfer of a fatty acyl group at the sn-1 position of phosphatidylcholine (PC) and other glycerophospholipids to the primary amine of phosphatidylethanolamine (PE), forming N-acylphosphatidylethanolamine (NAPE), which serves as precursor for N-acylethanolamines (NAEs). Exhibits high N-acyltransferase activity and low phospholipase A1/2 activity. Required for complete organelle rupture and degradation that occur during eye lens terminal differentiation, when fiber cells that compose the lens degrade all membrane-bound organelles in order to provide lens with transparency to allow the passage of light. Organelle membrane degradation is probably catalyzed by the phospholipase activity. Functionally, (Microbial infection) Acts as a host factor for picornaviruses: required during early infection to promote viral genome release into the cytoplasm. This Mus musculus (Mouse) protein is Phospholipase A and acyltransferase 3.